The primary structure comprises 379 residues: 23S rRNA (uracil(747)-C(5))-methyltransferase RlmC (379 aa).

Residues cysteine 3, cysteine 11, cysteine 14, and cysteine 87 each contribute to the [4Fe-4S] cluster site. Residues glutamine 212, phenylalanine 241, glutamate 262, and asparagine 309 each coordinate S-adenosyl-L-methionine. Cysteine 336 (nucleophile) is an active-site residue.

This sequence belongs to the class I-like SAM-binding methyltransferase superfamily. RNA M5U methyltransferase family. RlmC subfamily.

It carries out the reaction uridine(747) in 23S rRNA + S-adenosyl-L-methionine = 5-methyluridine(747) in 23S rRNA + S-adenosyl-L-homocysteine + H(+). Catalyzes the formation of 5-methyl-uridine at position 747 (m5U747) in 23S rRNA. In Shewanella loihica (strain ATCC BAA-1088 / PV-4), this protein is 23S rRNA (uracil(747)-C(5))-methyltransferase RlmC.